Here is a 161-residue protein sequence, read N- to C-terminus: Large ribosomal subunit protein uL30m (161 aa).

Residues 1-34 (MAGILRLVVQRPPGGLQTVTKGVESLIGTDWIRH) constitute a mitochondrion transit peptide.

It belongs to the universal ribosomal protein uL30 family. As to quaternary structure, component of the mitochondrial ribosome large subunit (39S) which comprises a 16S rRNA and about 50 distinct proteins.

It localises to the mitochondrion. This Macaca fascicularis (Crab-eating macaque) protein is Large ribosomal subunit protein uL30m (MRPL30).